The chain runs to 200 residues: Ribonuclease T2 (200 aa).

A disulfide bond links C17 and C22. H32 is a catalytic residue. C42 and C89 are disulfide-bonded. Residues N43 and N73 are each glycosylated (N-linked (GlcNAc...) asparagine). Residues E82 and H86 contribute to the active site. Residue N116 is glycosylated (N-linked (GlcNAc...) asparagine). 2 cysteine pairs are disulfide-bonded: C152/C188 and C170/C180.

The protein belongs to the RNase T2 family.

The protein localises to the secreted. The protein resides in the lysosome lumen. Its subcellular location is the endoplasmic reticulum lumen. It is found in the mitochondrion intermembrane space. The enzyme catalyses a ribonucleotidyl-ribonucleotide-RNA + H2O = a 3'-end 3'-phospho-ribonucleotide-RNA + a 5'-end dephospho-ribonucleoside-RNA + H(+). It carries out the reaction an adenylyl-uridine-RNA = a 3'-end 2',3'-cyclophospho-AMP-RNA + a 5'-end dephospho-uridine-RNA. It catalyses the reaction a guanylyl-uridine-RNA = a 3'-end 2',3'-cyclophospho-GMP-RNA + a 5'-end dephospho-uridine-RNA. Inhibited by Zn(2+) and Cu(2+). Functionally, ribonuclease that plays an essential role in innate immune response by recognizing and degrading RNAs from microbial pathogens that are subsequently sensed by TLR8. Cleaves preferentially single-stranded RNA molecules between purine and uridine residues, which critically contributes to the supply of catabolic uridine and the generation of purine-2',3'-cyclophosphate-terminated oligoribonucleotides. In turn, RNase T2 degradation products promote the RNA-dependent activation of TLR8. In plasmacytoid dendritic cells, it cooperates with PLD3 or PLD4 5'-&gt;3' exonucleases to process RNA fragments and release 2',3'-cyclic guanosine monophosphate (2',3'-cGMP), a potent stimulatory ligand for TLR7. Also plays a key role in degradation of mitochondrial RNA and processing of non-coding RNA imported from the cytosol into mitochondria. Participates as well in degradation of mitochondrion-associated cytosolic rRNAs. This chain is Ribonuclease T2 (RNASET2), found in Sus scrofa (Pig).